A 219-amino-acid chain; its full sequence is Vacuolar protein sorting-associated protein 20 homolog 1 (219 aa).

Residues 20–60 adopt a coiled-coil conformation; sequence SLKTQRRKLGQYQQKLEKVIEAEKQAARDLIREKRKDRALL. Positions 171-219 are disordered; it reads PEVPTKESEESEKLDLPDVPTKTPVASNAEITPAESATKTKVLEEPLPA. Over residues 174 to 186 the composition is skewed to basic and acidic residues; the sequence is PTKESEESEKLDL. Residues 194-209 show a composition bias toward polar residues; sequence PVASNAEITPAESATK.

This sequence belongs to the SNF7 family. In terms of assembly, component of the endosomal sorting required for transport complex III (ESCRT-III), composed at least of VPS2, VPS20, VPS24 and VPS32. Interacts with SKD1.

Its subcellular location is the endosome. Component of the ESCRT-III complex, which is required for multivesicular bodies (MVBs) formation and sorting of endosomal cargo proteins into MVBs. The ESCRT-III complex is probably involved in the concentration of MVB cargo. This is Vacuolar protein sorting-associated protein 20 homolog 1 (VPS20.1) from Arabidopsis thaliana (Mouse-ear cress).